Reading from the N-terminus, the 377-residue chain is Histidinol-phosphate aminotransferase (377 aa).

Lysine 232 carries the post-translational modification N6-(pyridoxal phosphate)lysine.

The protein belongs to the class-II pyridoxal-phosphate-dependent aminotransferase family. Histidinol-phosphate aminotransferase subfamily. As to quaternary structure, homodimer. Pyridoxal 5'-phosphate serves as cofactor.

The enzyme catalyses L-histidinol phosphate + 2-oxoglutarate = 3-(imidazol-4-yl)-2-oxopropyl phosphate + L-glutamate. It participates in amino-acid biosynthesis; L-histidine biosynthesis; L-histidine from 5-phospho-alpha-D-ribose 1-diphosphate: step 7/9. The chain is Histidinol-phosphate aminotransferase from Mycobacterium sp. (strain KMS).